Reading from the N-terminus, the 700-residue chain is Stonustoxin subunit beta (700 aa).

The segment at 2-264 (PSDILVVAAL…EAPQLMADSS (263 aa)) is structural MACPF/CDC pore-forming domain. Residues 265–384 (TPILRKVRNT…DILTKAKPKV (120 aa)) are structural FAT domain. Residues 385–514 (IFNQGVLFKG…PYMPGVESIK (130 aa)) form a thioredoxin (THX) domain region. The region spanning 506–700 (YMPGVESIKD…QKVNGQIKLL (195 aa)) is the B30.2/SPRY domain.

Belongs to the SNTX/VTX toxin family. In terms of assembly, heterodimer of alpha and beta subunits; non-covalently linked. In terms of processing, intrachain disulfide bonds may be present in the heterodimer. Not glycosylated. As to expression, expressed by the venom gland.

It localises to the secreted. Functionally, this lethal (towards mammals) heterodimer induces hemolytic activities due to its ability to form pores in the cell membrane. The pore may be composed of 10 SNTX-alpha/beta heterodimers. The toxin elicits potent hypotension which is endothelium-dependent and appears to be mediated by the nitric oxide pathway and activation of potassium channels. In addition, it displays edema-inducing activities, increases vascular permeability. It also shows myotoxic activities and interferes irreversibly with neuromuscular function. It also induces irreversible platelet aggregation in rabbit or rat but not in human or mouse whole blood. In addition, it has been observed to increase spontaneous quantal acetylcholine release from isolated frog cutaneous pectoris motor endings. The polypeptide is Stonustoxin subunit beta (Synanceia horrida (Estuarine stonefish)).